A 294-amino-acid polypeptide reads, in one-letter code: Protoheme IX farnesyltransferase (294 aa).

9 helical membrane-spanning segments follow: residues 22 to 42, 46 to 66, 89 to 109, 116 to 136, 143 to 163, 170 to 190, 211 to 231, 232 to 252, and 272 to 292; these read VTQL…PDLP, IVIA…AINC, ITVP…MWVL, LTMW…TIIL, NIVI…AAVA, AWIL…ALAL, AFTQ…TMLP, FAVG…DVIF, and FTYS…DHYL.

This sequence belongs to the UbiA prenyltransferase family. Protoheme IX farnesyltransferase subfamily.

The protein localises to the cell inner membrane. It catalyses the reaction heme b + (2E,6E)-farnesyl diphosphate + H2O = Fe(II)-heme o + diphosphate. The protein operates within porphyrin-containing compound metabolism; heme O biosynthesis; heme O from protoheme: step 1/1. In terms of biological role, converts heme B (protoheme IX) to heme O by substitution of the vinyl group on carbon 2 of heme B porphyrin ring with a hydroxyethyl farnesyl side group. This is Protoheme IX farnesyltransferase from Herminiimonas arsenicoxydans.